The chain runs to 164 residues: Transcription elongation factor GreA (164 aa).

A coiled-coil region spans residues 12 to 38 (RRLERELERLKKERPGVILAIKEAREE).

It belongs to the GreA/GreB family.

Its function is as follows. Necessary for efficient RNA polymerase transcription elongation past template-encoded arresting sites. The arresting sites in DNA have the property of trapping a certain fraction of elongating RNA polymerases that pass through, resulting in locked ternary complexes. Cleavage of the nascent transcript by cleavage factors such as GreA or GreB allows the resumption of elongation from the new 3'terminus. GreA releases sequences of 2 to 3 nucleotides. This is Transcription elongation factor GreA from Solidesulfovibrio magneticus (strain ATCC 700980 / DSM 13731 / RS-1) (Desulfovibrio magneticus).